Here is a 248-residue protein sequence, read N- to C-terminus: GTP cyclohydrolase 1 type 2 homolog (248 aa).

Positions 64, 65, 101, 216, and 220 each coordinate a divalent metal cation.

Belongs to the GTP cyclohydrolase I type 2/NIF3 family. In terms of assembly, homohexamer.

This is GTP cyclohydrolase 1 type 2 homolog from Borreliella burgdorferi (strain ATCC 35210 / DSM 4680 / CIP 102532 / B31) (Borrelia burgdorferi).